Reading from the N-terminus, the 215-residue chain is S-crystallin 2 (215 aa).

Residues 2-80 (PSYTLNYFNH…YLAREFGFHG (79 aa)) enclose the GST N-terminal domain. Positions 82-215 (NNMEMARVEY…YLKKRSSTEF (134 aa)) constitute a GST C-terminal domain.

This sequence belongs to the GST superfamily. As to expression, lens.

Functionally, S-crystallins are structural components of squids and octopi eye lens. Contains relatively little if any GST activity. The chain is S-crystallin 2 from Enteroctopus dofleini (North Pacific giant octopus).